The primary structure comprises 145 residues: Lysozyme C (145 aa).

The N-terminal stretch at Met1–Gly19 is a signal peptide. A C-type lysozyme domain is found at Glu20–Cys145. Intrachain disulfides connect Cys25-Cys145, Cys49-Cys133, Cys82-Cys98, and Cys94-Cys112. Residues Glu54 and Asp70 contribute to the active site.

It belongs to the glycosyl hydrolase 22 family. Monomer.

Its subcellular location is the secreted. It catalyses the reaction Hydrolysis of (1-&gt;4)-beta-linkages between N-acetylmuramic acid and N-acetyl-D-glucosamine residues in a peptidoglycan and between N-acetyl-D-glucosamine residues in chitodextrins.. Functionally, lysozymes have primarily a bacteriolytic function; those in tissues and body fluids are associated with the monocyte-macrophage system and enhance the activity of immunoagents. The polypeptide is Lysozyme C (LYZ) (Opisthocomus hoazin (Hoatzin)).